We begin with the raw amino-acid sequence, 716 residues long: Inhibitor of nuclear factor kappa-B kinase subunit epsilon (716 aa).

The region spanning 9-315 (WHTDDLLGQG…LQRVVVHVFS (307 aa)) is the Protein kinase domain. Residue 15-23 (LGQGATASV) coordinates ATP. A Glycyl lysine isopeptide (Lys-Gly) (interchain with G-Cter in ubiquitin) cross-link involves residue K30. K38 is an ATP binding site. D135 serves as the catalytic Proton acceptor. At S172 the chain carries Phosphoserine; by autocatalysis and IKKB. K231 is covalently cross-linked (Glycyl lysine isopeptide (Lys-Gly) (interchain with G-Cter in SUMO1)). The tract at residues 383-647 (STAIPKGLAF…VQESLSKLLE (265 aa)) is interaction with DDX3X. Residue K401 forms a Glycyl lysine isopeptide (Lys-Gly) (interchain with G-Cter in ubiquitin) linkage. The segment at 436–457 (QELMFRGLHWVMEVLQATCRRT) is leucine-zipper. T501 is modified (phosphothreonine). S664 carries the post-translational modification Phosphoserine.

This sequence belongs to the protein kinase superfamily. Ser/Thr protein kinase family. I-kappa-B kinase subfamily. As to quaternary structure, homodimer. Interacts with MAVS/IPS1. Interacts (via protein kinase domain) with TTLL12 (via N-terminus); the interaction prevents MAVS binding to IKBKE. Interacts with the adapter proteins AZI2/NAP1, TANK and TBKBP1/SINTBAD. Interacts with SIKE1. Interacts with TICAM1/TRIF, IRF3 and RIGI; interactions are disrupted by the interaction between IKBKE and SIKE1. Interacts with TOPORS; induced by DNA damage. Interacts with CYLD. Interacts (when polyubiquitinated) with IKBKB, IKBKG and MYD88. Interacts with IFIH1. Interacts with DDX3X; the interaction may be induced upon virus infection. Interacts with TRIM6 (via SPRY box). Interacts with unanchored K48-linked polyubiquitin chains; this leads to IKBKE activation. Interacts with TBK1. Interacts with FKBP5. In terms of assembly, (Microbial infection) Interacts (via Protein kinase domain) with arenavirus protein N; the interaction inhibits IKBKE kinase function. (Microbial infection) Interacts with Ebola virus protein VP35; the interaction leads to inhibition of cellular antiviral response by blocking necessary interactions between the IKBKE and MAVS/IPS as well as its substrates IRF3 and IRF7. As to quaternary structure, (Microbial infection) Interacts with Severe fever with thrombocytopenia virus (SFTSV) NSs; this interaction this interaction sequesters IKBKE in NSs-induced cytoplasmic inclusion bodies thereby inhibiting the IFN responses. In terms of assembly, (Microbial infection) Interacts with human T-cell leukemia virus 1/HTLV-1 protein HBZ. (Microbial infection) Interacts with Epstein-Barr virus (EBV) protein NEC2/BFRF1; this interaction inhibits IKBKE kinase activity and IRF3 nuclear translocation. In terms of processing, autophosphorylated and phosphorylated by IKBKB/IKKB. Phosphorylation at Ser-172 is enhanced by the interaction with DDX3X. Phosphorylated at Thr-501 upon IFN activation. Sumoylation by TOPORS upon DNA damage is required for protection of cells against DNA damage-induced cell death. Desumoylated by SENP1. Post-translationally, 'Lys-63'-linked polyubiquitinated at Lys-30 and Lys-401 by TRAF2:BIRC2 and TRAF2:BIRC3 complexes. Ubiquitination is induced by LPS, TNFA and interleukin-1 and required for full kinase activity and KF-kappa-B pathway activation. As to expression, highly expressed in spleen followed by thymus, peripheral blood leukocytes, pancreas, placenta. Weakly expressed in lung, kidney, prostate, ovary and colon.

The protein resides in the cytoplasm. The protein localises to the nucleus. It localises to the PML body. It carries out the reaction L-seryl-[I-kappa-B protein] + ATP = O-phospho-L-seryl-[I-kappa-B protein] + ADP + H(+). Serine/threonine kinase that plays an essential role in regulating inflammatory responses to viral infection, through the activation of the type I IFN, NF-kappa-B and STAT signaling. Also involved in TNFA and inflammatory cytokines, like Interleukin-1, signaling. Following activation of viral RNA sensors, such as RIG-I-like receptors, associates with DDX3X and phosphorylates interferon regulatory factors (IRFs), IRF3 and IRF7, as well as DDX3X. This activity allows subsequent homodimerization and nuclear translocation of the IRF3 leading to transcriptional activation of pro-inflammatory and antiviral genes including IFNB. In order to establish such an antiviral state, IKBKE forms several different complexes whose composition depends on the type of cell and cellular stimuli. Thus, several scaffolding molecules including IPS1/MAVS, TANK, AZI2/NAP1 or TBKBP1/SINTBAD can be recruited to the IKBKE-containing-complexes. Activated by polyubiquitination in response to TNFA and interleukin-1, regulates the NF-kappa-B signaling pathway through, at least, the phosphorylation of CYLD. Phosphorylates inhibitors of NF-kappa-B thus leading to the dissociation of the inhibitor/NF-kappa-B complex and ultimately the degradation of the inhibitor. In addition, is also required for the induction of a subset of ISGs which displays antiviral activity, may be through the phosphorylation of STAT1 at 'Ser-708'. Phosphorylation of STAT1 at 'Ser-708' also seems to promote the assembly and DNA binding of ISGF3 (STAT1:STAT2:IRF9) complexes compared to GAF (STAT1:STAT1) complexes, in this way regulating the balance between type I and type II IFN responses. Protects cells against DNA damage-induced cell death. Also plays an important role in energy balance regulation by sustaining a state of chronic, low-grade inflammation in obesity, wich leads to a negative impact on insulin sensitivity. Phosphorylates AKT1. In Homo sapiens (Human), this protein is Inhibitor of nuclear factor kappa-B kinase subunit epsilon (IKBKE).